A 242-amino-acid polypeptide reads, in one-letter code: MEWSGEASVMALQRHGESAVILTVLSRETGLIRGLVPGGASAKRAAMLQPGNRVSLRWRARLEEQLGTFAVEPARARPGLLGSGDALAGVNAVTALLTFALPERDPHPRLADATEALLDLMDAGEGWAEAYLHWEMRLLDELGFGLDLTSCAVTGAREGLAYVSPRSGRAVSAQAAGEWAPRLLPLPAMLGGRGNGGIEDALALTGHFLQVRLAEAHAGKPLPPARARLVARLTASRHASGW.

It belongs to the RecO family.

Functionally, involved in DNA repair and RecF pathway recombination. The polypeptide is DNA repair protein RecO (Paracoccus denitrificans (strain Pd 1222)).